Consider the following 350-residue polypeptide: 2-oxoisovalerate dehydrogenase subunit beta (350 aa).

As to quaternary structure, heterodimer of an alpha and a beta chain. Thiamine diphosphate serves as cofactor.

It catalyses the reaction N(6)-[(R)-lipoyl]-L-lysyl-[protein] + 3-methyl-2-oxobutanoate + H(+) = N(6)-[(R)-S(8)-2-methylpropanoyldihydrolipoyl]-L-lysyl-[protein] + CO2. In terms of biological role, the branched-chain alpha-keto dehydrogenase complex catalyzes the overall conversion of alpha-keto acids to acyl-CoA and CO(2). It contains multiple copies of three enzymatic components: branched-chain alpha-keto acid decarboxylase (E1), lipoamide acyltransferase (E2) and lipoamide dehydrogenase (E3). The protein is 2-oxoisovalerate dehydrogenase subunit beta (bkdA2) of Pseudomonas aeruginosa (strain ATCC 15692 / DSM 22644 / CIP 104116 / JCM 14847 / LMG 12228 / 1C / PRS 101 / PAO1).